The following is a 221-amino-acid chain: Keratin-associated protein 10-3 (221 aa).

18 consecutive repeat copies span residues 26–30 (CCEPP), 31–35 (CCATS), 36–40 (CCAPA), 57–61 (CCQAA), 79–83 (CCQQS), 89–93 (CCTSS), 99–103 (CCVPV), 104–108 (CCKPV), 109–113 (CCVPV), 114–118 (CCKPV), 119–123 (CCKPI), 124–128 (CCVPV), 136–140 (CCQQS), 146–150 (CCTTS), 151–155 (CCRPS), 177–181 (CCAPA), 188–192 (CCRPA), and 210–214 (CCGLS). Positions 26–214 (CCEPPCCATS…RLSSACCGLS (189 aa)) are 18 X 5 AA repeats of C-C-X(3).

Belongs to the KRTAP type 10 family. Interacts with hair keratins. Restricted to a narrow region of the hair fiber cuticle, lying approximately 20 cell layers above the apex of the dermal papilla of the hair root; not detected in any other tissues.

In the hair cortex, hair keratin intermediate filaments are embedded in an interfilamentous matrix, consisting of hair keratin-associated proteins (KRTAP), which are essential for the formation of a rigid and resistant hair shaft through their extensive disulfide bond cross-linking with abundant cysteine residues of hair keratins. The matrix proteins include the high-sulfur and high-glycine-tyrosine keratins. This Homo sapiens (Human) protein is Keratin-associated protein 10-3 (KRTAP10-3).